Reading from the N-terminus, the 274-residue chain is 4-diphosphocytidyl-2-C-methyl-D-erythritol kinase (274 aa).

Residue Lys8 is part of the active site. Residue 92 to 102 (PSGAGLGGGSS) coordinates ATP. Asp134 is an active-site residue.

It belongs to the GHMP kinase family. IspE subfamily.

It carries out the reaction 4-CDP-2-C-methyl-D-erythritol + ATP = 4-CDP-2-C-methyl-D-erythritol 2-phosphate + ADP + H(+). It participates in isoprenoid biosynthesis; isopentenyl diphosphate biosynthesis via DXP pathway; isopentenyl diphosphate from 1-deoxy-D-xylulose 5-phosphate: step 3/6. Its function is as follows. Catalyzes the phosphorylation of the position 2 hydroxy group of 4-diphosphocytidyl-2C-methyl-D-erythritol. The chain is 4-diphosphocytidyl-2-C-methyl-D-erythritol kinase from Porphyromonas gingivalis (strain ATCC 33277 / DSM 20709 / CIP 103683 / JCM 12257 / NCTC 11834 / 2561).